We begin with the raw amino-acid sequence, 906 residues long: Protein translocase subunit SecA (906 aa).

ATP is bound by residues Gln87, 105 to 109 (GEGKT), and Asp507. The span at 553–563 (RHESRRIDNQL) shows a compositional bias: basic and acidic residues. Disordered regions lie at residues 553–576 (RHES…PGSS) and 854–906 (LEEP…GRLA). Residues Cys890, Cys892, Cys901, and His902 each coordinate Zn(2+). Residues 896 to 906 (KKYKQCHGRLA) are compositionally biased toward basic residues.

This sequence belongs to the SecA family. Monomer and homodimer. Part of the essential Sec protein translocation apparatus which comprises SecA, SecYEG and auxiliary proteins SecDF-YajC and YidC. Zn(2+) is required as a cofactor.

It localises to the cell inner membrane. Its subcellular location is the cytoplasm. The enzyme catalyses ATP + H2O + cellular proteinSide 1 = ADP + phosphate + cellular proteinSide 2.. Its function is as follows. Part of the Sec protein translocase complex. Interacts with the SecYEG preprotein conducting channel. Has a central role in coupling the hydrolysis of ATP to the transfer of proteins into and across the cell membrane, serving both as a receptor for the preprotein-SecB complex and as an ATP-driven molecular motor driving the stepwise translocation of polypeptide chains across the membrane. This chain is Protein translocase subunit SecA, found in Methylococcus capsulatus (strain ATCC 33009 / NCIMB 11132 / Bath).